Here is a 676-residue protein sequence, read N- to C-terminus: DNA ligase (676 aa).

NAD(+) is bound by residues aspartate 35 to aspartate 39, serine 84 to leucine 85, and glutamate 118. Lysine 120 functions as the N6-AMP-lysine intermediate in the catalytic mechanism. Positions 141, 184, 299, and 323 each coordinate NAD(+). Residues cysteine 417, cysteine 420, cysteine 435, and cysteine 441 each contribute to the Zn(2+) site. Positions leucine 600 to leucine 676 constitute a BRCT domain.

Belongs to the NAD-dependent DNA ligase family. LigA subfamily. The cofactor is Mg(2+). Mn(2+) serves as cofactor.

It catalyses the reaction NAD(+) + (deoxyribonucleotide)n-3'-hydroxyl + 5'-phospho-(deoxyribonucleotide)m = (deoxyribonucleotide)n+m + AMP + beta-nicotinamide D-nucleotide.. In terms of biological role, DNA ligase that catalyzes the formation of phosphodiester linkages between 5'-phosphoryl and 3'-hydroxyl groups in double-stranded DNA using NAD as a coenzyme and as the energy source for the reaction. It is essential for DNA replication and repair of damaged DNA. The protein is DNA ligase of Chlorobium phaeobacteroides (strain DSM 266 / SMG 266 / 2430).